A 349-amino-acid polypeptide reads, in one-letter code: UDP-3-O-acylglucosamine N-acyltransferase (349 aa).

Residue His240 is the Proton acceptor of the active site.

This sequence belongs to the transferase hexapeptide repeat family. LpxD subfamily. Homotrimer.

The catalysed reaction is a UDP-3-O-[(3R)-3-hydroxyacyl]-alpha-D-glucosamine + a (3R)-hydroxyacyl-[ACP] = a UDP-2-N,3-O-bis[(3R)-3-hydroxyacyl]-alpha-D-glucosamine + holo-[ACP] + H(+). The protein operates within bacterial outer membrane biogenesis; LPS lipid A biosynthesis. Functionally, catalyzes the N-acylation of UDP-3-O-acylglucosamine using 3-hydroxyacyl-ACP as the acyl donor. Is involved in the biosynthesis of lipid A, a phosphorylated glycolipid that anchors the lipopolysaccharide to the outer membrane of the cell. The sequence is that of UDP-3-O-acylglucosamine N-acyltransferase from Porphyromonas gingivalis (strain ATCC 33277 / DSM 20709 / CIP 103683 / JCM 12257 / NCTC 11834 / 2561).